Reading from the N-terminus, the 234-residue chain is Ribonuclease 3 (234 aa).

The region spanning 13–136 (YITLEKALGY…LMAGVYLEAG (124 aa)) is the RNase III domain. Glutamate 49 contacts Mg(2+). The active site involves aspartate 53. Residues serine 122 and glutamate 125 each contribute to the Mg(2+) site. Glutamate 125 is a catalytic residue. Residues 163-232 (DYKTALQELT…AYQALQKLKG (70 aa)) enclose the DRBM domain.

This sequence belongs to the ribonuclease III family. In terms of assembly, homodimer. Mg(2+) is required as a cofactor.

The protein resides in the cytoplasm. It catalyses the reaction Endonucleolytic cleavage to 5'-phosphomonoester.. Digests double-stranded RNA. Involved in the processing of primary rRNA transcript to yield the immediate precursors to the large and small rRNAs (23S and 16S). Processes some mRNAs, and tRNAs when they are encoded in the rRNA operon. Processes pre-crRNA and tracrRNA of type II CRISPR loci if present in the organism. This is Ribonuclease 3 from Helicobacter acinonychis (strain Sheeba).